We begin with the raw amino-acid sequence, 764 residues long: Phenylalanine--tRNA ligase beta subunit (764 aa).

In terms of domain architecture, tRNA-binding spans 38-148; it reads CIAPKNVVVG…GELVLGKELH (111 aa). Residues 375–455 enclose the B5 domain; the sequence is LKDCALTFQL…RFVGIDNLVS (81 aa). Aspartate 433, aspartate 439, glutamate 442, and glutamate 443 together coordinate Mg(2+). The FDX-ACB domain occupies 673–763; it reads SIYPSSVRDL…LEKEFNARLK (91 aa).

It belongs to the phenylalanyl-tRNA synthetase beta subunit family. Type 1 subfamily. Tetramer of two alpha and two beta subunits. Mg(2+) serves as cofactor.

The protein localises to the cytoplasm. It carries out the reaction tRNA(Phe) + L-phenylalanine + ATP = L-phenylalanyl-tRNA(Phe) + AMP + diphosphate + H(+). This Helicobacter pylori (strain J99 / ATCC 700824) (Campylobacter pylori J99) protein is Phenylalanine--tRNA ligase beta subunit (pheT).